The primary structure comprises 284 residues: Tropomyosin, smooth muscle/fibroblast CTM1 (284 aa).

The stretch at 1 to 284 (MEAIKKKMTM…DVTLQGIGDL (284 aa)) forms a coiled coil. Positions 18-38 (AIDRAEQAETDKKSAEDKATG) are disordered.

The protein belongs to the tropomyosin family. Homodimer. Predominantly expressed in body wall muscle and heart, low in intestine, ovary and larval tail muscle.

The function of tropomyosin in smooth muscle and non-muscle cells is not clear. This chain is Tropomyosin, smooth muscle/fibroblast CTM1 (CTM1), found in Ciona intestinalis (Transparent sea squirt).